Reading from the N-terminus, the 459-residue chain is Hemopexin (459 aa).

Residues 1-23 form the signal peptide; the sequence is MARALRVPVALWLLGLCWSLAKA. Intrachain disulfides connect C52–C232, C150–C155, and C189–C201. Hemopexin repeat units lie at residues 55 to 95, 96 to 140, 141 to 185, and 186 to 232; these read GWGF…WKDA, PSPV…FPGI, PFPL…SWPA, and VGNC…FMSC. H81 serves as a coordination point for heme. H151 lines the heme pocket. N-linked (GlcNAc...) asparagine glycosylation is present at N188. N-linked (GlcNAc...) asparagine glycosylation is present at N218. H237 lines the heme pocket. N241 is a glycosylation site (N-linked (GlcNAc...) asparagine). 3 disulfides stabilise this stretch: C250–C453, C359–C401, and C411–C428. 4 Hemopexin repeats span residues 252 to 297, 298 to 345, 350 to 389, and 393 to 444; these read PHLV…WPQG, PSTV…FGSP, LHSV…WTEL, and HTKV…LPQA. A heme-binding site is contributed by H286.

It belongs to the hemopexin family.

The protein localises to the secreted. Binds heme and transports it to the liver for breakdown and iron recovery, after which the free hemopexin returns to the circulation. This is Hemopexin (HPX) from Bos taurus (Bovine).